The primary structure comprises 365 residues: Protein SGT1 homolog (365 aa).

An N-acetylalanine modification is found at Ala2. 3 TPR repeats span residues 11–44, 45–78, and 79–112; these read SQRF…KPDD, AQYY…NPNN, and STAM…DIET. Positions 169–258 constitute a CS domain; sequence QSKIKYDWYQ…PEAVRWEKLE (90 aa). Thr265 is modified (phosphothreonine). An SGS domain is found at 276 to 365; it reads LYPSSSPYTR…PPDDMEWKKY (90 aa). Ser281 carries the phosphoserine modification. Residue Thr284 is modified to Phosphothreonine. Lys295 participates in a covalent cross-link: Glycyl lysine isopeptide (Lys-Gly) (interchain with G-Cter in SUMO1); alternate. Lys295 is covalently cross-linked (Glycyl lysine isopeptide (Lys-Gly) (interchain with G-Cter in SUMO2); alternate). Position 331 is a phosphoserine (Ser331).

It belongs to the SGT1 family. Probably associates with SCF (SKP1-CUL1-F-box protein) complex through interaction with SKP1. Interacts with S100A6. Interacts with HSP90. In terms of processing, phosphorylated at Ser-281 and Ser-331, dephosphorylation promotes nuclear translocation, most likely due to disruption of the SUGT1-HSP90 complex.

Its subcellular location is the cytoplasm. It is found in the nucleus. In terms of biological role, may play a role in ubiquitination and subsequent proteasomal degradation of target proteins. The protein is Protein SGT1 homolog of Homo sapiens (Human).